We begin with the raw amino-acid sequence, 320 residues long: Aspartate carbamoyltransferase catalytic subunit (320 aa).

Carbamoyl phosphate-binding residues include Arg68 and Thr69. Lys96 lines the L-aspartate pocket. 3 residues coordinate carbamoyl phosphate: Arg118, His148, and Gln151. 2 residues coordinate L-aspartate: Arg181 and Arg236. The carbamoyl phosphate site is built by Gly277 and Pro278.

The protein belongs to the aspartate/ornithine carbamoyltransferase superfamily. ATCase family. As to quaternary structure, heterododecamer (2C3:3R2) of six catalytic PyrB chains organized as two trimers (C3), and six regulatory PyrI chains organized as three dimers (R2).

The enzyme catalyses carbamoyl phosphate + L-aspartate = N-carbamoyl-L-aspartate + phosphate + H(+). It functions in the pathway pyrimidine metabolism; UMP biosynthesis via de novo pathway; (S)-dihydroorotate from bicarbonate: step 2/3. Catalyzes the condensation of carbamoyl phosphate and aspartate to form carbamoyl aspartate and inorganic phosphate, the committed step in the de novo pyrimidine nucleotide biosynthesis pathway. The protein is Aspartate carbamoyltransferase catalytic subunit of Variovorax paradoxus (strain S110).